We begin with the raw amino-acid sequence, 72 residues long: MKASKIREMTNQELHNELKKLKNELFNLRFQLATNQLENPMRIREVKRTIARIKTILRERELEQEKANKNAK.

Belongs to the universal ribosomal protein uL29 family.

This Caldicellulosiruptor saccharolyticus (strain ATCC 43494 / DSM 8903 / Tp8T 6331) protein is Large ribosomal subunit protein uL29.